Here is a 123-residue protein sequence, read N- to C-terminus: Putative C-type lectin protein FPV003/FPV258 (123 aa).

The C-type lectin domain maps to 21–122; the sequence is CRGPYTSYNN…CNATYGFVCI (102 aa).

The protein is Putative C-type lectin protein FPV003/FPV258 of Fowlpox virus (strain NVSL) (FPV).